Reading from the N-terminus, the 524-residue chain is tRNA-2-methylthio-N(6)-dimethylallyladenosine synthase (524 aa).

Residues 1–12 are compositionally biased toward basic and acidic residues; that stretch reads MNTHPSHPDHPA. The segment at 1 to 23 is disordered; that stretch reads MNTHPSHPDHPADTLPARGNREG. The 117-residue stretch at 27 to 143 folds into the MTTase N-terminal domain; that stretch reads RTYEVRTFGC…LPTLLNRAEH (117 aa). Positions 36, 72, 106, 180, 184, and 187 each coordinate [4Fe-4S] cluster. The Radical SAM core domain maps to 166–402; it reads RESAYAGWVS…MALQERICEE (237 aa). One can recognise a TRAM domain in the interval 405–476; sequence QKFIGQTVEL…PFFLIADAGV (72 aa).

The protein belongs to the methylthiotransferase family. MiaB subfamily. In terms of assembly, monomer. It depends on [4Fe-4S] cluster as a cofactor.

It is found in the cytoplasm. The catalysed reaction is N(6)-dimethylallyladenosine(37) in tRNA + (sulfur carrier)-SH + AH2 + 2 S-adenosyl-L-methionine = 2-methylsulfanyl-N(6)-dimethylallyladenosine(37) in tRNA + (sulfur carrier)-H + 5'-deoxyadenosine + L-methionine + A + S-adenosyl-L-homocysteine + 2 H(+). Functionally, catalyzes the methylthiolation of N6-(dimethylallyl)adenosine (i(6)A), leading to the formation of 2-methylthio-N6-(dimethylallyl)adenosine (ms(2)i(6)A) at position 37 in tRNAs that read codons beginning with uridine. This chain is tRNA-2-methylthio-N(6)-dimethylallyladenosine synthase, found in Corynebacterium efficiens (strain DSM 44549 / YS-314 / AJ 12310 / JCM 11189 / NBRC 100395).